The following is a 440-amino-acid chain: Glutamyl-tRNA reductase (440 aa).

Residues 55 to 58, serine 115, 120 to 122, and glutamine 126 each bind substrate; these read TCNR and ETQ. The active-site Nucleophile is the cysteine 56. 199 to 204 is an NADP(+) binding site; that stretch reads GSGEMG.

It belongs to the glutamyl-tRNA reductase family. Homodimer.

The catalysed reaction is (S)-4-amino-5-oxopentanoate + tRNA(Glu) + NADP(+) = L-glutamyl-tRNA(Glu) + NADPH + H(+). Its pathway is porphyrin-containing compound metabolism; protoporphyrin-IX biosynthesis; 5-aminolevulinate from L-glutamyl-tRNA(Glu): step 1/2. In terms of biological role, catalyzes the NADPH-dependent reduction of glutamyl-tRNA(Glu) to glutamate 1-semialdehyde (GSA). This Helicobacter hepaticus (strain ATCC 51449 / 3B1) protein is Glutamyl-tRNA reductase.